Reading from the N-terminus, the 117-residue chain is Transcription elongation factor A protein-like 8 (117 aa).

Basic and acidic residues-rich tracts occupy residues 1–10 (MQKSCEENEG) and 61–75 (FKED…PEEM). The tract at residues 1–75 (MQKSCEENEG…PVRHLDPEEM (75 aa)) is disordered. Residues 73–100 (EEMIRGVDELERLREEIRRVRNKFVMMH) adopt a coiled-coil conformation.

The protein belongs to the TFS-II family. TFA subfamily.

Its subcellular location is the nucleus. In terms of biological role, may be involved in transcriptional regulation. The polypeptide is Transcription elongation factor A protein-like 8 (TCEAL8) (Homo sapiens (Human)).